The following is a 264-amino-acid chain: Apolipoprotein A-I (264 aa).

The first 18 residues, 1-18 (MRGVLVTLAVLFLTGTQA), serve as a signal peptide directing secretion. 2 tandem repeats follow at residues 67 to 88 (LKLA…EDMA) and 89 to 110 (PYYK…AELT). The 10 X approximate tandem repeats stretch occupies residues 67–264 (LKLADNLDTL…FLDELQKSVA (198 aa)). Residues 111–121 (KDLEEVKEKIR) form a 3; half-length repeat. 5 consecutive repeat copies span residues 122–143 (PFLD…QRLT), 144–165 (PVAQ…AKLT), 166–187 (PVAE…KNLA), 188–209 (PYSD…EKGI), and 210–231 (PQAS…EKMT). A 9; half-length repeat occupies 232–242 (PLVQEFRERLT). Residues 243–264 (PYAENLKNRLISFLDELQKSVA) form repeat 10.

This sequence belongs to the apolipoprotein A1/A4/E family. Homodimer. As to expression, major protein of plasma HDL, also found in chylomicrons.

Its subcellular location is the secreted. In terms of biological role, participates in the reverse transport of cholesterol from tissues to the liver for excretion by promoting cholesterol efflux from tissues and by acting as a cofactor for the lecithin cholesterol acyltransferase (LCAT). This Gallus gallus (Chicken) protein is Apolipoprotein A-I (APOA1).